A 131-amino-acid polypeptide reads, in one-letter code: Small ribosomal subunit protein uS8 (131 aa).

This sequence belongs to the universal ribosomal protein uS8 family. As to quaternary structure, part of the 30S ribosomal subunit. Contacts proteins S5 and S12.

One of the primary rRNA binding proteins, it binds directly to 16S rRNA central domain where it helps coordinate assembly of the platform of the 30S subunit. In Chlorobium limicola (strain DSM 245 / NBRC 103803 / 6330), this protein is Small ribosomal subunit protein uS8.